Consider the following 424-residue polypeptide: MLDIKFLRTNFEEVKAKLQHRGEDLTDFGRFEELDTRRRELLVQTEELKSKRNEVSQQISVLKREKKDAEALILEMREVGEKVKDLDNELRTVEEDLERLMLSIPNIPHESAPVGETEDDNVVARTWGEVKEFTYEPKPHWDLATDLGILDFERAGKVTGSRFVFYKGAGARLERALISFMLDLHTDEHGYEEVLPPYMVNRASMTGTGQLPKFEEDAFRIESEDYFLIPTAEVPVTNMHRDEILNKEQLPIRYAAFSSCFRSEAGSAGRDTRGLIRQHQFNKVELVKFVKPEDSYEELEKLTNDAERVLQLLELPYRVMSMCTGDLGFTAAKKYDIEVWIPSYGTYREISSCSNFEAFQARRANIRFRREPNGKPEHVHTLNGSGLAIGRTVAAILENYQQEDGTIIIPEVLRPYMGGKTVIK.

An L-serine-binding site is contributed by 231 to 233; that stretch reads TAE. Position 262–264 (262–264) interacts with ATP; sequence RSE. L-serine is bound at residue E285. Residue 349–352 participates in ATP binding; the sequence is EISS. Residue S385 coordinates L-serine.

Belongs to the class-II aminoacyl-tRNA synthetase family. Type-1 seryl-tRNA synthetase subfamily. As to quaternary structure, homodimer. The tRNA molecule binds across the dimer.

It is found in the cytoplasm. The catalysed reaction is tRNA(Ser) + L-serine + ATP = L-seryl-tRNA(Ser) + AMP + diphosphate + H(+). It carries out the reaction tRNA(Sec) + L-serine + ATP = L-seryl-tRNA(Sec) + AMP + diphosphate + H(+). The protein operates within aminoacyl-tRNA biosynthesis; selenocysteinyl-tRNA(Sec) biosynthesis; L-seryl-tRNA(Sec) from L-serine and tRNA(Sec): step 1/1. Functionally, catalyzes the attachment of serine to tRNA(Ser). Is also able to aminoacylate tRNA(Sec) with serine, to form the misacylated tRNA L-seryl-tRNA(Sec), which will be further converted into selenocysteinyl-tRNA(Sec). This is Serine--tRNA ligase from Bacillus cereus (strain B4264).